The primary structure comprises 42 residues: DSSEEKFLRRLRRFDEGRYGPYQPFVPPPLYPQPYQPYQPQY.

The segment at 1-6 (DSSEEK) is hydroxyapatite-binding; inhibits crystal growth. A phosphoserine mark is found at S2 and S3. Positions 18–42 (RYGPYQPFVPPPLYPQPYQPYQPQY) are disordered. Residues 18–42 (RYGPYQPFVPPPLYPQPYQPYQPQY) are hydrophobic; inhibits precipitation of calcium phosphate salts. The segment covering 24 to 42 (PFVPPPLYPQPYQPYQPQY) has biased composition (pro residues).

Belongs to the histatin/statherin family. As to expression, secreted by parotid and submandibular glands.

It localises to the secreted. Functionally, salivary protein that stabilizes saliva supersaturated with calcium salts by inhibiting the precipitation of calcium phosphate salts. It also modulates hydroxyapatite crystal formation on the tooth surface. In Macaca arctoides (Stump-tailed macaque), this protein is Statherin (STATH).